The sequence spans 807 residues: Dual specificity protein phosphatase PPS1 (807 aa).

A Tyrosine-protein phosphatase domain is found at 585–783 (LPSRILRHLY…LFKWWKKHYN (199 aa)). A catalytic region spans residues 593-807 (LYLGSLDHAQ…GIAEVNMKYT (215 aa)). The active-site Phosphocysteine intermediate is C725.

Belongs to the protein-tyrosine phosphatase family. Non-receptor class dual specificity subfamily.

The catalysed reaction is O-phospho-L-tyrosyl-[protein] + H2O = L-tyrosyl-[protein] + phosphate. The enzyme catalyses O-phospho-L-seryl-[protein] + H2O = L-seryl-[protein] + phosphate. It carries out the reaction O-phospho-L-threonyl-[protein] + H2O = L-threonyl-[protein] + phosphate. Protein phosphatase with specificity for serine, threonine, and tyrosine residues; has a role in the DNA synthesis phase of the cell cycle. This is Dual specificity protein phosphatase PPS1 (PPS1) from Saccharomyces cerevisiae (strain ATCC 204508 / S288c) (Baker's yeast).